The primary structure comprises 248 residues: MSFTMREMLEAGVHFGHQTRFWNPKMAPYIFGHRNKIHIINLEKTVPLFNEATKYARQLAGKRGTILFVGTKRQARDVVAMEAARAGMPFVETRWLGGMLTNFKTVKGSLKKLKEMQAQVEAGTQPAIKKEALMFQREIAKLEKDIGGIQDMNALPDALFVIDVGFHKIAIAEAKKLGIPVIGVVDTNHSPVGIDYVIPGNDDSAKAVALYARVMADAIIEGKANSLNEVVEAAAGASDEFVEVSDPA.

This sequence belongs to the universal ribosomal protein uS2 family.

The protein is Small ribosomal subunit protein uS2 of Leptothrix cholodnii (strain ATCC 51168 / LMG 8142 / SP-6) (Leptothrix discophora (strain SP-6)).